We begin with the raw amino-acid sequence, 96 residues long: Small ubiquitin-related modifier 2 (96 aa).

A Glycyl lysine isopeptide (Lys-Gly) (interchain with G-Cter in SUMO) cross-link involves residue lysine 11. In terms of domain architecture, Ubiquitin-like spans 16 to 96; it reads DHINLKVAGQ…FQQQTGGHRI (81 aa). Glycine 93 participates in a covalent cross-link: Glycyl lysine isopeptide (Gly-Lys) (interchain with K-? in acceptor proteins). A propeptide spanning residues 94 to 96 is cleaved from the precursor; the sequence is HRI.

Belongs to the ubiquitin family. SUMO subfamily. As to quaternary structure, interacts with sae2 and ube2i. Covalently attached to a number of proteins. Post-translationally, polymeric chains can be formed through Lys-11 cross-linking. Cleavage of precursor form by a sentrin-specific protease is necessary for function.

Its subcellular location is the nucleus. Ubiquitin-like protein that can be covalently attached to proteins as a monomer or as a lysine-linked polymer. Covalent attachment via an isopeptide bond to its substrates requires prior activation by the E1 complex sae1-sae2 and linkage to the E2 enzyme ube2i, and can be promoted by an E3 ligase such as pias1-4. This post-translational modification on lysine residues of proteins plays a crucial role in a number of cellular processes such as nuclear transport, DNA replication and repair, mitosis and signal transduction. Polymeric sumo2 chains are also susceptible to polyubiquitination which functions as a signal for proteasomal degradation of modified proteins. The protein is Small ubiquitin-related modifier 2 of Danio rerio (Zebrafish).